Reading from the N-terminus, the 214-residue chain is Nucleoside triphosphate pyrophosphatase (214 aa).

Catalysis depends on aspartate 79, which acts as the Proton acceptor.

It belongs to the Maf family. The cofactor is a divalent metal cation.

It localises to the cytoplasm. It carries out the reaction a ribonucleoside 5'-triphosphate + H2O = a ribonucleoside 5'-phosphate + diphosphate + H(+). It catalyses the reaction a 2'-deoxyribonucleoside 5'-triphosphate + H2O = a 2'-deoxyribonucleoside 5'-phosphate + diphosphate + H(+). In terms of biological role, nucleoside triphosphate pyrophosphatase. May have a dual role in cell division arrest and in preventing the incorporation of modified nucleotides into cellular nucleic acids. The polypeptide is Nucleoside triphosphate pyrophosphatase (Rhodococcus jostii (strain RHA1)).